Here is a 305-residue protein sequence, read N- to C-terminus: NAD-dependent protein deacylase SIR4 (305 aa).

Residues methionine 1 to valine 10 constitute a mitochondrion transit peptide. Positions methionine 11 to arginine 305 constitute a Deacetylase sirtuin-type domain. Residues glycine 37–serine 57 and glutamine 118–aspartate 121 contribute to the NAD(+) site. Histidine 139 functions as the Proton acceptor in the catalytic mechanism. Zn(2+) contacts are provided by cysteine 147, cysteine 150, cysteine 209, and cysteine 212. Residues glycine 249–serine 251, asparagine 275–glycine 277, and serine 293 each bind NAD(+).

The protein belongs to the sirtuin family. Class II subfamily. The cofactor is Zn(2+).

The protein localises to the mitochondrion matrix. The enzyme catalyses N(6)-acetyl-L-lysyl-[protein] + NAD(+) + H2O = 2''-O-acetyl-ADP-D-ribose + nicotinamide + L-lysyl-[protein]. Functionally, NAD-dependent protein deacylase. Catalyzes the NAD-dependent hydrolysis of acyl groups from lysine residues. This is NAD-dependent protein deacylase SIR4 from Batrachochytrium dendrobatidis (strain JAM81 / FGSC 10211) (Frog chytrid fungus).